Here is a 602-residue protein sequence, read N- to C-terminus: Glutamyl-tRNA(Gln) amidotransferase subunit B, mitochondrial (602 aa).

The transit peptide at 1–56 directs the protein to the mitochondrion; it reads MFRSCLRHCRRATVRSRTCPRCSHHEIPQLQVVQRQISLSSSFPHIRRLQTSSTDT.

The protein belongs to the GatB/GatE family. GatB subfamily. In terms of assembly, subunit of the heterotrimeric GatCAB amidotransferase (AdT) complex, composed of A, B and C subunits.

The protein localises to the mitochondrion. It carries out the reaction L-glutamyl-tRNA(Gln) + L-glutamine + ATP + H2O = L-glutaminyl-tRNA(Gln) + L-glutamate + ADP + phosphate + H(+). Its function is as follows. Allows the formation of correctly charged Gln-tRNA(Gln) through the transamidation of misacylated Glu-tRNA(Gln) in the mitochondria. The reaction takes place in the presence of glutamine and ATP through an activated gamma-phospho-Glu-tRNA(Gln). This Emericella nidulans (strain FGSC A4 / ATCC 38163 / CBS 112.46 / NRRL 194 / M139) (Aspergillus nidulans) protein is Glutamyl-tRNA(Gln) amidotransferase subunit B, mitochondrial (nempA).